Consider the following 120-residue polypeptide: Flagellar protein FliT (120 aa).

Residues M1–N50 form a required for homodimerization region. Residues L59–K97 are fliD binding.

The protein belongs to the FliT family. In terms of assembly, homodimer. Interacts with FliD and FlhC.

Its subcellular location is the cytoplasm. It localises to the cytosol. Dual-function protein that regulates the transcription of class 2 flagellar operons and that also acts as an export chaperone for the filament-capping protein FliD. As a transcriptional regulator, acts as an anti-FlhDC factor; it directly binds FlhC, thus inhibiting the binding of the FlhC/FlhD complex to class 2 promoters, resulting in decreased expression of class 2 flagellar operons. As a chaperone, effects FliD transition to the membrane by preventing its premature polymerization, and by directing it to the export apparatus. This chain is Flagellar protein FliT, found in Citrobacter koseri (strain ATCC BAA-895 / CDC 4225-83 / SGSC4696).